The following is a 1068-amino-acid chain: Protein AF-10 (1068 aa).

The PHD-type 1 zinc-finger motif lies at Ile-22–Gln-74. The C2HC pre-PHD-type zinc finger occupies Arg-79 to Val-112. Residues Ala-106–Tyr-190 are required for interaction with histone H3. Residues Lys-135–Phe-198 form a PHD-type 2 zinc finger. The tract at residues Gly-207–Thr-260 is disordered. At Ser-217 the chain carries Phosphoserine. A compositionally biased stretch (basic and acidic residues) spans Ser-223 to Lys-240. Residue Ser-252 is modified to Phosphoserine. A Glycyl lysine isopeptide (Lys-Gly) (interchain with G-Cter in SUMO2) cross-link involves residue Lys-280. Residues Glu-296–Lys-305 are compositionally biased toward polar residues. 2 disordered regions span residues Glu-296 to Ser-416 and Ser-428 to Ser-506. The segment covering Asp-306–Gly-317 has biased composition (basic and acidic residues). The segment covering Thr-340 to Gly-351 has biased composition (polar residues). Positions Ser-352 to Gln-372 are enriched in low complexity. Composition is skewed to polar residues over residues Tyr-387–Thr-396, Ser-404–Ser-416, and Ser-428–Pro-446. Ser-436 bears the Phosphoserine mark. Basic residues predominate over residues Glu-465–Gly-483. Over residues Val-490–Ser-506 the composition is skewed to low complexity. Phosphoserine is present on Ser-532. The span at Ser-583–Ser-594 shows a compositional bias: low complexity. Disordered stretches follow at residues Ser-583 to Ser-613 and Ser-660 to Leu-698. A compositionally biased stretch (polar residues) spans His-595–Leu-604. Residues Ser-681–Pro-692 are compositionally biased toward low complexity. Phosphoserine is present on residues Ser-686, Ser-688, and Ser-691. Residues Leu-752 to Leu-780 are leucine-zipper. Disordered regions lie at residues Ala-786–Val-869 and Pro-1040–Ser-1068. Polar residues predominate over residues Ile-787–Ser-816. 2 stretches are compositionally biased toward low complexity: residues Leu-836–Ser-850 and Gln-857–Val-869. Polar residues predominate over residues Pro-1040–Thr-1054.

In terms of assembly, self-associates. Interacts with FSTL3; the interaction enhances MLLT10 in vitro transcriptional activity and self-association. Interacts with YEATS4. Interacts with SS18. Interacts with DOT1L. Interacts with histone H3; interaction is necessary for MLLT10 binding to nucleosomes; interaction is inhibited by histone H3 'Lys-27' methylations (H3K27me1, H3K27me2 and H3K27me3) amd acetylation; interaction stabilizes association of MLLT10 at chromatin; interaction is essential for histone H3 'Lys-79' dimethylation (H3K79me2).

It is found in the nucleus. In terms of biological role, probably involved in transcriptional regulation. Binds to cruciform DNA. In cells, binding to unmodified histone H3 regulates DOT1L functions including histone H3 'Lys-79' dimethylation (H3K79me2) and gene activation. The sequence is that of Protein AF-10 from Mus musculus (Mouse).